Reading from the N-terminus, the 910-residue chain is Leucine--tRNA ligase (910 aa).

The short motif at 42 to 52 (PYPSGKLHMGH) is the 'HIGH' region element. Positions 658-662 (TMSKS) match the 'KMSKS' region motif. An ATP-binding site is contributed by Lys-661.

It belongs to the class-I aminoacyl-tRNA synthetase family.

It localises to the cytoplasm. It carries out the reaction tRNA(Leu) + L-leucine + ATP = L-leucyl-tRNA(Leu) + AMP + diphosphate. The sequence is that of Leucine--tRNA ligase from Acidovorax ebreus (strain TPSY) (Diaphorobacter sp. (strain TPSY)).